The sequence spans 377 residues: E3 ubiquitin-protein ligase rififylin (377 aa).

The FYVE-type zinc-finger motif lies at 55–107 (TGSEPSCKACGVHFASTTRKQTCLDCKKNFCMTCSSQEGNGPRLCLLCLRFRA). Residues 115–134 (LMKMKVKDLRDYLSLHDIST) enclose the SAP 1 domain. The segment at 176–249 (LTQPQTSTVP…SVDSEDSFVP (74 aa)) is disordered. The span at 190-212 (GLPSSPAQVTSVPLAQDQETQQA) shows a compositional bias: polar residues. Acidic residues predominate over residues 235 to 245 (EDETQSVDSED). A phosphoserine mark is found at S240, S243, S246, and S254. In terms of domain architecture, SAP 2 spans 264–278 (IEGLTVRQLKEILAR). The RING-type zinc finger occupies 330–365 (CKICMDSPIDCVLLECGHMVTCTKCGKRMNECPICR).

In terms of assembly, interacts with CASP8 and CASP10. Interacts with RIPK1 (via protein kinase domain); involved in RIPK1 ubiquitination. Interacts with PRR5L. Interacts (via RING-type zinc finger) with p53/TP53; involved in p53/TP53 ubiquitination. Interacts (via RING-type zinc finger) with MDM2; the interaction stabilizes MDM2. Autoubiquitinated. Post-translationally, palmitoylated. In terms of processing, undergoes caspase-mediated cleavage upon death-receptor activation, by TNFSF10 for instance. May be mediated by the caspases CASP8 and CASP10 in a negative feedback loop. As to expression, ubiquitous. Detected in heart, brain, spleen, lung, liver, skeletal muscle, kidney, testis, thymus, whole embryo and embryonic stem cells.

It is found in the cytoplasm. It localises to the cytosol. The protein localises to the cell membrane. The protein resides in the recycling endosome membrane. The catalysed reaction is S-ubiquitinyl-[E2 ubiquitin-conjugating enzyme]-L-cysteine + [acceptor protein]-L-lysine = [E2 ubiquitin-conjugating enzyme]-L-cysteine + N(6)-ubiquitinyl-[acceptor protein]-L-lysine.. Its pathway is protein modification; protein ubiquitination. Functionally, E3 ubiquitin-protein ligase that regulates several biological processes through the ubiquitin-mediated proteasomal degradation of various target proteins. Mediates 'Lys-48'-linked polyubiquitination of PRR5L and its subsequent proteasomal degradation thereby indirectly regulating cell migration through the mTORC2 complex. Also ubiquitinates the caspases CASP8 and CASP10, promoting their proteasomal degradation, to negatively regulate apoptosis downstream of death domain receptors. Also negatively regulates the tumor necrosis factor-mediated signaling pathway through targeting of RIPK1 to ubiquitin-mediated proteasomal degradation. Negatively regulates p53/TP53 through its direct ubiquitination and targeting to proteasomal degradation. Indirectly, may also negatively regulate p53/TP53 through ubiquitination and degradation of SFN. May also play a role in endocytic recycling. The chain is E3 ubiquitin-protein ligase rififylin from Mus musculus (Mouse).